A 169-amino-acid polypeptide reads, in one-letter code: Large ribosomal subunit protein uL10 (169 aa).

Belongs to the universal ribosomal protein uL10 family. In terms of assembly, part of the ribosomal stalk of the 50S ribosomal subunit. The N-terminus interacts with L11 and the large rRNA to form the base of the stalk. The C-terminus forms an elongated spine to which L12 dimers bind in a sequential fashion forming a multimeric L10(L12)X complex.

Functionally, forms part of the ribosomal stalk, playing a central role in the interaction of the ribosome with GTP-bound translation factors. The polypeptide is Large ribosomal subunit protein uL10 (Onion yellows phytoplasma (strain OY-M)).